We begin with the raw amino-acid sequence, 467 residues long: Argininosuccinate lyase (467 aa).

Belongs to the lyase 1 family. Argininosuccinate lyase subfamily.

It is found in the cytoplasm. The catalysed reaction is 2-(N(omega)-L-arginino)succinate = fumarate + L-arginine. Its pathway is amino-acid biosynthesis; L-arginine biosynthesis; L-arginine from L-ornithine and carbamoyl phosphate: step 3/3. The protein is Argininosuccinate lyase of Methylibium petroleiphilum (strain ATCC BAA-1232 / LMG 22953 / PM1).